The chain runs to 328 residues: Probable cytosolic iron-sulfur protein assembly protein 1 (328 aa).

7 WD repeats span residues 12 to 49, 54 to 93, 102 to 141, 148 to 187, 192 to 233, 246 to 284, and 291 to 328; these read LHGD…LVEE, AHKK…YSGE, GHEN…EEFE, EHSQ…WECA, GHGG…ADVF, VHTR…RWEV, and AHTV…LREE.

The protein belongs to the WD repeat CIA1 family. In terms of assembly, interacts with NAR1.

Its subcellular location is the cytoplasm. The protein resides in the nucleus. In terms of biological role, essential component of the cytosolic iron-sulfur (Fe/S) protein assembly machinery. Required for the maturation of extramitochondrial Fe/S proteins. This Eremothecium gossypii (strain ATCC 10895 / CBS 109.51 / FGSC 9923 / NRRL Y-1056) (Yeast) protein is Probable cytosolic iron-sulfur protein assembly protein 1.